Consider the following 568-residue polypeptide: Arginine--tRNA ligase (568 aa).

A 'HIGH' region motif is present at residues 129–139 (ANPTGPLHIGH).

This sequence belongs to the class-I aminoacyl-tRNA synthetase family. As to quaternary structure, monomer.

Its subcellular location is the cytoplasm. The catalysed reaction is tRNA(Arg) + L-arginine + ATP = L-arginyl-tRNA(Arg) + AMP + diphosphate. The protein is Arginine--tRNA ligase of Wolbachia pipientis wMel.